A 113-amino-acid polypeptide reads, in one-letter code: Na(+)/H(+) antiporter subunit C (113 aa).

A run of 3 helical transmembrane segments spans residues 4-21 (LMAV…YLLL), 28-47 (VIIG…LTMG), and 67-89 (PLPQ…FILV).

It belongs to the CPA3 antiporters (TC 2.A.63) subunit C family. As to quaternary structure, forms a heterooligomeric complex that consists of seven subunits: MrpA, MrpB, MrpC, MrpD, MrpE, MrpF and MrpG.

It localises to the cell membrane. Functionally, mrp complex is a Na(+)/H(+) antiporter that is considered to be the major Na(+) excretion system in B.subtilis. Has a major role in Na(+) resistance and a minor role in Na(+)- and K(+)-dependent pH homeostasis as compared to TetB. MrpA may be the actual Na(+)/H(+) antiporter, although the six other Mrp proteins are all required for Na(+)/H(+) antiport activity and Na(+) resistance. MrpA is required for initiation of sporulation when external Na(+) concentration increases. Also transports Li(+) but not K(+), Ca(2+) or Mg(2+). In Bacillus subtilis (strain 168), this protein is Na(+)/H(+) antiporter subunit C (mrpC).